The primary structure comprises 373 residues: Putative zinc finger protein 012R (373 aa).

The C2H2-type zinc-finger motif lies at 2–29 (FECTHCDLHFESKSKLATHQKTKKCTAH).

Belongs to the IIV-6 302L family.

The sequence is that of Putative zinc finger protein 012R from Invertebrate iridescent virus 3 (IIV-3).